Here is a 160-residue protein sequence, read N- to C-terminus: uncharacterized protein (160 aa).

Residues 69–145 (NQLLNMMAQA…EQREHVKEQR (77 aa)) are a coiled coil. Disordered regions lie at residues 82–109 (GVRL…LKNA) and 129–160 (KKKQ…HRGK). Residues 86-99 (QGRRQKKINPKRLQ) are compositionally biased toward basic residues. The span at 133–146 (IMKEQREHVKEQRY) shows a compositional bias: basic and acidic residues. Basic residues predominate over residues 147-160 (MLKKQKAKKKHRGK).

This is an uncharacterized protein from Bacillus subtilis (strain 168).